Consider the following 305-residue polypeptide: UDP-3-O-acyl-N-acetylglucosamine deacetylase (305 aa).

The Zn(2+) site is built by His79, His238, and Asp242. Catalysis depends on His265, which acts as the Proton donor.

This sequence belongs to the LpxC family. It depends on Zn(2+) as a cofactor.

It carries out the reaction a UDP-3-O-[(3R)-3-hydroxyacyl]-N-acetyl-alpha-D-glucosamine + H2O = a UDP-3-O-[(3R)-3-hydroxyacyl]-alpha-D-glucosamine + acetate. The protein operates within glycolipid biosynthesis; lipid IV(A) biosynthesis; lipid IV(A) from (3R)-3-hydroxytetradecanoyl-[acyl-carrier-protein] and UDP-N-acetyl-alpha-D-glucosamine: step 2/6. Its function is as follows. Catalyzes the hydrolysis of UDP-3-O-myristoyl-N-acetylglucosamine to form UDP-3-O-myristoylglucosamine and acetate, the committed step in lipid A biosynthesis. The protein is UDP-3-O-acyl-N-acetylglucosamine deacetylase of Colwellia psychrerythraea (strain 34H / ATCC BAA-681) (Vibrio psychroerythus).